The primary structure comprises 564 residues: Tripeptidyl-peptidase 1 (564 aa).

A signal peptide spans 1–19 (MGLQACLLGLFALILSGKC). The propeptide at 20–195 (SYSPEPDQRR…PEPQVTGTVG (176 aa)) is removed in mature form. C111 and C122 are disulfide-bonded. A Peptidase S53 domain is found at 199–564 (GVTPSVIRKR…PALPKTLLNP (366 aa)). Residues N210 and N222 are each glycosylated (N-linked (GlcNAc...) asparagine). Residues E272 and D276 each act as charge relay system in the active site. N286, N313, and N443 each carry an N-linked (GlcNAc...) asparagine glycan. 2 cysteine pairs are disulfide-bonded: C365-C527 and C523-C538. S475 acts as the Charge relay system in catalysis. The Ca(2+) site is built by D518 and V519. Positions 540, 542, and 544 each coordinate Ca(2+).

As to quaternary structure, monomer. Interacts with CLN5. Interacts with CLN3. Ca(2+) serves as cofactor. Post-translationally, activated by autocatalytic proteolytical processing upon acidification. N-glycosylation is required for processing and activity.

Its subcellular location is the lysosome. The protein resides in the melanosome. It catalyses the reaction Release of an N-terminal tripeptide from a polypeptide, but also has endopeptidase activity.. In terms of biological role, lysosomal serine protease with tripeptidyl-peptidase I activity. May act as a non-specific lysosomal peptidase which generates tripeptides from the breakdown products produced by lysosomal proteinases. Requires substrates with an unsubstituted N-terminus. The chain is Tripeptidyl-peptidase 1 (TPP1) from Pongo abelii (Sumatran orangutan).